The sequence spans 623 residues: Indolepyruvate oxidoreductase subunit IorA (623 aa).

Positions 573, 576, 579, 585, 602, 605, 608, and 612 each coordinate [4Fe-4S] cluster. Positions 593-622 (EKVSIDQSLCVGCAVCAKICPNRAIKPAKS) constitute a 4Fe-4S ferredoxin-type domain.

Heterodimer of the IorA and IorB subunits. [4Fe-4S] cluster serves as cofactor.

It carries out the reaction indole-3-pyruvate + 2 oxidized [2Fe-2S]-[ferredoxin] + CoA = (indol-3-yl)acetyl-CoA + 2 reduced [2Fe-2S]-[ferredoxin] + CO2 + H(+). In terms of biological role, catalyzes the ferredoxin-dependent oxidative decarboxylation of arylpyruvates. This chain is Indolepyruvate oxidoreductase subunit IorA (iorA), found in Archaeoglobus fulgidus (strain ATCC 49558 / DSM 4304 / JCM 9628 / NBRC 100126 / VC-16).